The sequence spans 221 residues: Lysine N-acyltransferase MbtK (221 aa).

Residues Met-1 to Asp-34 are disordered. A substrate-binding site is contributed by His-141. Asp-179 (proton acceptor) is an active-site residue.

The protein belongs to the lysine N-acyltransferase MbtK family. In terms of assembly, monomer.

It functions in the pathway siderophore biosynthesis; mycobactin biosynthesis. In terms of biological role, acyltransferase required for the direct transfer of medium- to long-chain fatty acyl moieties from a carrier protein (MbtL) on to the epsilon-amino group of lysine residue in the mycobactin core. The protein is Lysine N-acyltransferase MbtK (mbtK) of Mycolicibacterium paratuberculosis (strain ATCC BAA-968 / K-10) (Mycobacterium paratuberculosis).